The following is a 104-amino-acid chain: Vacuolar ATPase assembly integral membrane protein VMA21 (104 aa).

At 1-21 (MSNRVSTGKMAMAPQESVQPA) the chain is on the cytoplasmic side. A helical transmembrane segment spans residues 22 to 42 (VLYKLVLFALLMAVVPIGTYF). The Lumenal portion of the chain corresponds to 43 to 65 (STLNYLWDGASRCGFPSGLCSTT). The helical transmembrane segment at 66-86 (FAAISAIAAANLILVGYVVVA) threads the bilayer. The Cytoplasmic portion of the chain corresponds to 87–104 (FREDAASRTGPLPEKKTS). The Prevents secretion from ER motif lies at 101-104 (KKTS).

Belongs to the VMA21 family.

Its subcellular location is the endoplasmic reticulum membrane. It is found in the endoplasmic reticulum-Golgi intermediate compartment membrane. The protein resides in the cytoplasmic vesicle. It localises to the COPII-coated vesicle membrane. Functionally, required for the assembly of the V0 complex of the vacuolar ATPase (V-ATPase) in the endoplasmic reticulum. The chain is Vacuolar ATPase assembly integral membrane protein VMA21 from Cryptococcus neoformans var. neoformans serotype D (strain B-3501A) (Filobasidiella neoformans).